The following is a 252-amino-acid chain: 2-C-methyl-D-erythritol 4-phosphate cytidylyltransferase (252 aa).

It belongs to the IspD/TarI cytidylyltransferase family. IspD subfamily.

The enzyme catalyses 2-C-methyl-D-erythritol 4-phosphate + CTP + H(+) = 4-CDP-2-C-methyl-D-erythritol + diphosphate. The protein operates within isoprenoid biosynthesis; isopentenyl diphosphate biosynthesis via DXP pathway; isopentenyl diphosphate from 1-deoxy-D-xylulose 5-phosphate: step 2/6. In terms of biological role, catalyzes the formation of 4-diphosphocytidyl-2-C-methyl-D-erythritol from CTP and 2-C-methyl-D-erythritol 4-phosphate (MEP). This is 2-C-methyl-D-erythritol 4-phosphate cytidylyltransferase from Chlorobium phaeobacteroides (strain BS1).